A 1218-amino-acid polypeptide reads, in one-letter code: Mgp-operon protein 3 (1218 aa).

Residues 1-25 (MKSKLKLKRYLLFLPLLPLGTLSLA) form the signal peptide. 4 disordered regions span residues 109–129 (QESQ…SGSN), 213–245 (HFGS…GFKL), 262–353 (EPLD…AVVS), and 411–440 (QDAT…PALT). A compositionally biased stretch (low complexity) spans 116–129 (NGSQSGSSDTSGSN). The span at 217–231 (GQESSWNSQRSQKGL) shows a compositional bias: polar residues. Positions 265-286 (DSTKEGKGKDESSWKNSEKTTA) are enriched in basic and acidic residues. The span at 301–342 (AGSASSLQGNGSNSSGLKSLLRSAPVSVPPSSTSNQTLSLSN) shows a compositional bias: low complexity. The span at 411–428 (QDATSTNLPHAAGASQTG) shows a compositional bias: polar residues. The helical transmembrane segment at 1121–1141 (VGSSVGILLILLILGLGIGIP) threads the bilayer. Over residues 1192 to 1204 (NNAAPKAPVKPAA) the composition is skewed to low complexity. Positions 1192–1218 (NNAAPKAPVKPAAPTAPRPPVQPPKKA) are disordered. Pro residues predominate over residues 1205 to 1218 (PTAPRPPVQPPKKA).

It localises to the cell membrane. This chain is Mgp-operon protein 3, found in Mycoplasma pneumoniae (strain ATCC 29342 / M129 / Subtype 1) (Mycoplasmoides pneumoniae).